A 261-amino-acid chain; its full sequence is Flap endonuclease Xni (261 aa).

Aspartate 105 provides a ligand contact to Mg(2+). The 93-residue stretch at 164 to 256 folds into the 5'-3' exonuclease domain; that stretch reads SQFLDLMALA…DFRVNSPTKA (93 aa). Residues leucine 172, alanine 173, proline 181, isoleucine 183, and isoleucine 186 each coordinate K(+). Residues 185–190 are interaction with DNA; that stretch reads GIGPKS.

This sequence belongs to the Xni family. Mg(2+) is required as a cofactor. It depends on K(+) as a cofactor.

Its function is as follows. Has flap endonuclease activity. During DNA replication, flap endonucleases cleave the 5'-overhanging flap structure that is generated by displacement synthesis when DNA polymerase encounters the 5'-end of a downstream Okazaki fragment. This Shewanella oneidensis (strain ATCC 700550 / JCM 31522 / CIP 106686 / LMG 19005 / NCIMB 14063 / MR-1) protein is Flap endonuclease Xni.